A 540-amino-acid polypeptide reads, in one-letter code: Glucose-6-phosphate isomerase (540 aa).

Glu351 acts as the Proton donor in catalysis. Active-site residues include His382 and Lys506.

Belongs to the GPI family.

It localises to the cytoplasm. It carries out the reaction alpha-D-glucose 6-phosphate = beta-D-fructose 6-phosphate. It functions in the pathway carbohydrate biosynthesis; gluconeogenesis. It participates in carbohydrate degradation; glycolysis; D-glyceraldehyde 3-phosphate and glycerone phosphate from D-glucose: step 2/4. Catalyzes the reversible isomerization of glucose-6-phosphate to fructose-6-phosphate. This chain is Glucose-6-phosphate isomerase, found in Corynebacterium glutamicum (strain ATCC 13032 / DSM 20300 / JCM 1318 / BCRC 11384 / CCUG 27702 / LMG 3730 / NBRC 12168 / NCIMB 10025 / NRRL B-2784 / 534).